The following is a 237-amino-acid chain: Protein UL24 homolog (237 aa).

This sequence belongs to the herpesviridae UL24 family.

This Equus caballus (Horse) protein is Protein UL24 homolog (20).